A 387-amino-acid polypeptide reads, in one-letter code: Flap endonuclease 1 (387 aa).

The interval 1–104 (MGILGLSKLI…GELAKRAERR (104 aa)) is N-domain. Aspartate 34 contributes to the Mg(2+) binding site. 2 residues coordinate DNA: arginine 47 and arginine 70. Mg(2+) is bound by residues aspartate 86, glutamate 158, glutamate 160, aspartate 179, and aspartate 181. Positions 122–253 (GIEKFNRRLV…KRAIELINNY (132 aa)) are I-domain. A DNA-binding site is contributed by glutamate 158. Glycine 231 and aspartate 233 together coordinate DNA. Aspartate 233 lines the Mg(2+) pocket. The segment at 336-344 (TQVRLDSFF) is interaction with PCNA. The interval 345–387 (KTLPSTPNATNAAKRKAEEAKKSANNKKAKTSGGGGGRGRRPK) is disordered.

Belongs to the XPG/RAD2 endonuclease family. FEN1 subfamily. As to quaternary structure, interacts with PCNA. Three molecules of FEN1 bind to one PCNA trimer with each molecule binding to one PCNA monomer. PCNA stimulates the nuclease activity without altering cleavage specificity. The cofactor is Mg(2+). Phosphorylated. Phosphorylation upon DNA damage induces relocalization to the nuclear plasma.

It localises to the nucleus. The protein localises to the nucleolus. The protein resides in the nucleoplasm. Its subcellular location is the mitochondrion. Functionally, structure-specific nuclease with 5'-flap endonuclease and 5'-3' exonuclease activities involved in DNA replication and repair. During DNA replication, cleaves the 5'-overhanging flap structure that is generated by displacement synthesis when DNA polymerase encounters the 5'-end of a downstream Okazaki fragment. It enters the flap from the 5'-end and then tracks to cleave the flap base, leaving a nick for ligation. Also involved in the long patch base excision repair (LP-BER) pathway, by cleaving within the apurinic/apyrimidinic (AP) site-terminated flap. Acts as a genome stabilization factor that prevents flaps from equilibrating into structures that lead to duplications and deletions. Also possesses 5'-3' exonuclease activity on nicked or gapped double-stranded DNA, and exhibits RNase H activity. Also involved in replication and repair of rDNA and in repairing mitochondrial DNA. The polypeptide is Flap endonuclease 1 (Drosophila yakuba (Fruit fly)).